The sequence spans 1024 residues: Protein translocase subunit SecA (1024 aa).

Residues glutamine 143, glycine 161–threonine 165, and aspartate 661 contribute to the ATP site. The segment at histidine 970–alanine 1024 is disordered. Zn(2+) contacts are provided by cysteine 1008, cysteine 1010, cysteine 1019, and histidine 1020. Basic residues predominate over residues lysine 1014–alanine 1024.

Belongs to the SecA family. As to quaternary structure, monomer and homodimer. Part of the essential Sec protein translocation apparatus which comprises SecA, SecYEG and auxiliary proteins SecDF. Other proteins may also be involved. The cofactor is Zn(2+).

The protein localises to the cell inner membrane. Its subcellular location is the cytoplasm. The catalysed reaction is ATP + H2O + cellular proteinSide 1 = ADP + phosphate + cellular proteinSide 2.. Its function is as follows. Part of the Sec protein translocase complex. Interacts with the SecYEG preprotein conducting channel. Has a central role in coupling the hydrolysis of ATP to the transfer of proteins into and across the cell membrane, serving as an ATP-driven molecular motor driving the stepwise translocation of polypeptide chains across the membrane. This chain is Protein translocase subunit SecA, found in Chlorobium luteolum (strain DSM 273 / BCRC 81028 / 2530) (Pelodictyon luteolum).